A 144-amino-acid polypeptide reads, in one-letter code: Bradykinin-potentiating and C-type natriuretic peptides isoform 2 (144 aa).

Positions 1–23 (MVLSRLAASGLLLLALLALSVDG) are cleaved as a signal peptide. Positions 24 to 30 (KPVQQWA) are excised as a propeptide. Pyrrolidone carboxylic acid is present on Q31. The propeptide occupies 41–47 (LLVQQWA). Q48 carries the post-translational modification Pyrrolidone carboxylic acid. Positions 61–67 (LTVQQWA) are excised as a propeptide. Q68 is modified (pyrrolidone carboxylic acid). Positions 78–84 (LTVQQWA) are excised as a propeptide. A disordered region spans residues 81–110 (QQWAQGRPPGPPIPPLTVQQWAQARPPHPP). A Pyrrolidone carboxylic acid modification is found at Q85. Positions 96 to 102 (LTVQQWA) are excised as a propeptide. Q103 carries the pyrrolidone carboxylic acid modification. The propeptide occupies 114-116 (APL). Q117 is subject to Pyrrolidone carboxylic acid. Residue V122 is a propeptide. Q123 bears the Pyrrolidone carboxylic acid mark. Positions 128–144 (VQKWAPVQKWAPLLQPT) are excised as a propeptide.

It in the N-terminal section; belongs to the bradykinin-potentiating peptide family. Expressed by venom gland.

It localises to the secreted. The protein resides in the cytoplasm. The protein localises to the cytosol. Peptide with several activities. It inhibits the activity of the angiotensin-converting enzyme (ACE) by a preferential interaction with its C-domain. It evokes transient hypotension (-14 mmHg) similar to that evoked by 0.5 ug of bradykinin, when injected alone into rats. It has a high bradykinin-potentiating effect (120%), when 60 nmol of BPP-10c are coinjected with 0.5 ug of bradykinin into rats. Does not affect angiotensin-1 pressor effects. Shows potent and long-lasting antihypertensive activity as well as a reduction of the heart rate. It also binds and dose-dependently promotes the activation of cytosolic argininosuccinate synthase (ASS1), an enzyme that catalyzes the conversion of citrulline, L-aspartate and ATP to argininosuccinate, AMP and pyrophosphate. It also enhances ASS1-dependent arginine production in HEK 293 cells, as well as in spontaneous hypertensive rat (SHR) and Wistar rat plasma. In addition, it induces the production of nitric-oxide (NO) by HUVEC cells via the endothelial nitric-oxide synthase (NOS3), which use arginine as a substrate and produce NO. It has been shown to be internalized by ASS1-expressing endothelial (HUVEC) and kidney (HEK 293) cells, and is detected homogenously distributed within the cell cytoplasm for up to 2 hours. In terms of biological role, acts as indirect hypotensive agent. Increases leukocyte rolling flux and adhesion by five-fold in post-capillary venules, without any increments in vasodilation of arterioles. Functionally, acts as indirect hypotensive agent. Potently induces vasodilation of arterioles, with only a small increase in leukocyte rolling flux. This is Bradykinin-potentiating and C-type natriuretic peptides isoform 2 from Bothrops jararacussu (Jararacussu).